A 44-amino-acid chain; its full sequence is Photosystem I reaction center subunit IX (44 aa).

A helical membrane pass occupies residues 7-27 (YLSVAPVLSTLSLGFLTGFLI).

The protein belongs to the PsaJ family.

The protein localises to the plastid membrane. Functionally, may help in the organization of the PsaE and PsaF subunits. This chain is Photosystem I reaction center subunit IX, found in Cuscuta gronovii (Common dodder).